A 152-amino-acid polypeptide reads, in one-letter code: Large ribosomal subunit protein uL13 (152 aa).

Residues 133-152 are disordered; the sequence is EHPHQAQKPQPLTINTIPGA. Over residues 139–152 the composition is skewed to polar residues; the sequence is QKPQPLTINTIPGA.

It belongs to the universal ribosomal protein uL13 family. Part of the 50S ribosomal subunit.

Functionally, this protein is one of the early assembly proteins of the 50S ribosomal subunit, although it is not seen to bind rRNA by itself. It is important during the early stages of 50S assembly. This is Large ribosomal subunit protein uL13 from Thermosynechococcus vestitus (strain NIES-2133 / IAM M-273 / BP-1).